A 539-amino-acid chain; its full sequence is 4-hydroxybenzoate--CoA/benzoate--CoA ligase (539 aa).

This sequence belongs to the ATP-dependent AMP-binding enzyme family. Benzoate-CoA ligase subfamily. In terms of assembly, homodimer. In terms of processing, the N-terminus is blocked.

The enzyme catalyses 4-hydroxybenzoate + ATP + CoA = 4-hydroxybenzoyl-CoA + AMP + diphosphate. It carries out the reaction benzoate + ATP + CoA = benzoyl-CoA + AMP + diphosphate. Functionally, catalyzes the ligation of 4-hydroxybenzoate, benzoate or cyclohex-1,4-dienecarboxylate and CoA at the expense of ATP. The enzyme shows low activity towards cyclo-2,5-dienecarboxylate, 4-fluorobenzoate, 4-chlorobenzoate and 2-methoxybenzoate. The sequence is that of 4-hydroxybenzoate--CoA/benzoate--CoA ligase (hbaA) from Rhodopseudomonas palustris (strain ATCC BAA-98 / CGA009).